The chain runs to 305 residues: Acetyl-coenzyme A carboxylase carboxyl transferase subunit beta (305 aa).

Residues 25–294 enclose the CoA carboxyltransferase N-terminal domain; the sequence is VWTKCDSCGQ…PGNDDVEIRS (270 aa). C29, C32, C48, and C51 together coordinate Zn(2+). Residues 29-51 form a C4-type zinc finger; that stretch reads CDSCGQVLYRAELERNLGVCPKC. The interval 281-305 is disordered; the sequence is NHPEPGNDDVEIRSDAPSESSQDDA.

Belongs to the AccD/PCCB family. As to quaternary structure, acetyl-CoA carboxylase is a heterohexamer composed of biotin carboxyl carrier protein (AccB), biotin carboxylase (AccC) and two subunits each of ACCase subunit alpha (AccA) and ACCase subunit beta (AccD). The cofactor is Zn(2+).

The protein localises to the cytoplasm. The catalysed reaction is N(6)-carboxybiotinyl-L-lysyl-[protein] + acetyl-CoA = N(6)-biotinyl-L-lysyl-[protein] + malonyl-CoA. It participates in lipid metabolism; malonyl-CoA biosynthesis; malonyl-CoA from acetyl-CoA: step 1/1. Functionally, component of the acetyl coenzyme A carboxylase (ACC) complex. Biotin carboxylase (BC) catalyzes the carboxylation of biotin on its carrier protein (BCCP) and then the CO(2) group is transferred by the transcarboxylase to acetyl-CoA to form malonyl-CoA. In Pectobacterium atrosepticum (strain SCRI 1043 / ATCC BAA-672) (Erwinia carotovora subsp. atroseptica), this protein is Acetyl-coenzyme A carboxylase carboxyl transferase subunit beta.